A 76-amino-acid polypeptide reads, in one-letter code: UPF0729 protein C18orf32 homolog (76 aa).

Positions 1–37 (MVCIPCIVIPVLLWVYKKFLEPYIYPLISPFVSRMWP) are necessary for its localzation to the endoplasmic reticulum and lipid droplets. A compositionally biased stretch (basic and acidic residues) spans 47-56 (KNKGKVDYKG). The tract at residues 47-76 (KNKGKVDYKGADINGLPTRGPTEMCDKKKD) is disordered.

This sequence belongs to the UPF0729 family. As to quaternary structure, interacts with DERL1 and AMFR. In terms of processing, undergoes ER-associated degradation (ERAD).

Its subcellular location is the endoplasmic reticulum. It localises to the lipid droplet. Functionally, may activate the NF-kappa-B signaling pathway. The chain is UPF0729 protein C18orf32 homolog from Bos taurus (Bovine).